A 143-amino-acid polypeptide reads, in one-letter code: MINISEKAISARTATATGRIHLRRSTIQAIREKKVKKGDVLEVSRVVGTQHAKNTFLQIPYCHNIPIEGVDVDFNVGEDYVEVSCTLTTTYKTGIEMEAISCVSGALINIWDMVKYLEKDESGNYPETRIDGIHVVEKRKTPV.

Residues 61 to 63 and 97 to 98 contribute to the substrate site; these read YCH and ME. Residue Asp112 is part of the active site.

It belongs to the MoaC family. As to quaternary structure, homohexamer; trimer of dimers.

It carries out the reaction (8S)-3',8-cyclo-7,8-dihydroguanosine 5'-triphosphate = cyclic pyranopterin phosphate + diphosphate. The protein operates within cofactor biosynthesis; molybdopterin biosynthesis. Functionally, catalyzes the conversion of (8S)-3',8-cyclo-7,8-dihydroguanosine 5'-triphosphate to cyclic pyranopterin monophosphate (cPMP). The sequence is that of Probable cyclic pyranopterin monophosphate synthase from Thermoplasma acidophilum (strain ATCC 25905 / DSM 1728 / JCM 9062 / NBRC 15155 / AMRC-C165).